The sequence spans 53 residues: UPF0337 protein LJ_0034.1 (53 aa).

The interval 27–53 (AREVEGKAQQAKGKVKSKATEVKEDLE) is disordered. The segment covering 44-53 (KATEVKEDLE) has biased composition (basic and acidic residues).

This sequence belongs to the UPF0337 (CsbD) family.

The sequence is that of UPF0337 protein LJ_0034.1 from Lactobacillus johnsonii (strain CNCM I-12250 / La1 / NCC 533).